The chain runs to 428 residues: MTWQSPISPGYSWYEATIPERPVFPIMPGSRKADVAIIGGGYTGLQAACNLARSGTDVTLIDACRFGDGASGRNGGQFGTGQRVWADETEEVLGREWAQRLFDMAENAKRYVLGFAEEHAIDIEFMPGQLSVGHKASLERDYRNHVEAMTGRYGYPHLSFMDREETVSRLGSSHYHFGIRDTGTGHIHPMKLVVGLARQAALAGANLYEGTKALKIEKKGGAVVIETTSGTITADRALIACNGYIGNLEPVTASHVMPIRSFIGATTVLHGHPEILPGGESVDDSRFVVRYFRKSKDGRLLFGGREAYTADNPRDISAHIRRQICEIYPDLADVEITHAWGGSVGITMPRQPFCREVMPGVTTIGGYSGHGVMLANYCGKLYAELALGKSTELDLLKQLKIPAFPGGTRFRSALLFLALSWYALRDRF.

The polypeptide is Probable oxidoreductase OrdL (ordL) (Rhizobium meliloti (strain 1021) (Ensifer meliloti)).